The sequence spans 459 residues: C-type lectin domain family 14 member A (459 aa).

The N-terminal stretch at methionine 1–glycine 21 is a signal peptide. Topologically, residues glutamate 22–threonine 386 are extracellular. The region spanning alanine 33 to tyrosine 173 is the C-type lectin domain. The cysteines at positions 143 and 162 are disulfide-linked. Asparagine 189 carries N-linked (GlcNAc...) asparagine glycosylation. The EGF-like domain occupies proline 246 to glutamate 288. N-linked (GlcNAc...) asparagine glycosylation is found at asparagine 306, asparagine 317, and asparagine 370. Residues valine 387–leucine 407 traverse the membrane as a helical segment. The Cytoplasmic portion of the chain corresponds to glycine 408–alanine 459. Position 440 is a phosphoserine (serine 440).

The protein resides in the membrane. This is C-type lectin domain family 14 member A (Clec14a) from Mus musculus (Mouse).